Consider the following 262-residue polypeptide: Thiazole synthase (262 aa).

Residue lysine 96 is the Schiff-base intermediate with DXP of the active site. 1-deoxy-D-xylulose 5-phosphate contacts are provided by residues glycine 157, 184 to 185 (AG), and 206 to 207 (NT).

It belongs to the ThiG family. As to quaternary structure, homotetramer. Forms heterodimers with either ThiH or ThiS.

It localises to the cytoplasm. It catalyses the reaction [ThiS sulfur-carrier protein]-C-terminal-Gly-aminoethanethioate + 2-iminoacetate + 1-deoxy-D-xylulose 5-phosphate = [ThiS sulfur-carrier protein]-C-terminal Gly-Gly + 2-[(2R,5Z)-2-carboxy-4-methylthiazol-5(2H)-ylidene]ethyl phosphate + 2 H2O + H(+). It functions in the pathway cofactor biosynthesis; thiamine diphosphate biosynthesis. Catalyzes the rearrangement of 1-deoxy-D-xylulose 5-phosphate (DXP) to produce the thiazole phosphate moiety of thiamine. Sulfur is provided by the thiocarboxylate moiety of the carrier protein ThiS. In vitro, sulfur can be provided by H(2)S. The protein is Thiazole synthase of Legionella pneumophila (strain Paris).